A 335-amino-acid polypeptide reads, in one-letter code: MPQILIFTYLNMFYFFPPLQILAENLTMVTEFLLLGFSSLGEIQLALFVVFLFLYLVILSGNVTIISVIHLDKSLHTPMYFFLGILSTSETFYTFVILPKMLINLLSVARTISFNCCALQMFFFLGFAITNCLLLGVMGYDRYAAICHPLHYPTLMSWQVCGKLAAACAIGGFLASLTVVNLVFSLPFCSANKVNHYFCDISAVILLACTNTDVNEFVIFICGVLVLVVPFLFICVSYLCILRTILKIPSAEGRRKAFSTCASHLSVVIVHYGCASFIYLRPTANYVSNKDRLVTVTYTIVTPLLNPMVYSLRNKDVQLAIRKVLGKKGSLKLYN.

The Extracellular portion of the chain corresponds to 1–45 (MPQILIFTYLNMFYFFPPLQILAENLTMVTEFLLLGFSSLGEIQL). A glycan (N-linked (GlcNAc...) asparagine) is linked at Asn-25. Residues 46-66 (ALFVVFLFLYLVILSGNVTII) traverse the membrane as a helical segment. Topologically, residues 67–74 (SVIHLDKS) are cytoplasmic. The helical transmembrane segment at 75–95 (LHTPMYFFLGILSTSETFYTF) threads the bilayer. At 96-119 (VILPKMLINLLSVARTISFNCCAL) the chain is on the extracellular side. A disulfide bridge links Cys-117 with Cys-209. A helical membrane pass occupies residues 120–140 (QMFFFLGFAITNCLLLGVMGY). Topologically, residues 141–159 (DRYAAICHPLHYPTLMSWQ) are cytoplasmic. Residues 160–180 (VCGKLAAACAIGGFLASLTVV) traverse the membrane as a helical segment. At 181–217 (NLVFSLPFCSANKVNHYFCDISAVILLACTNTDVNEF) the chain is on the extracellular side. A helical transmembrane segment spans residues 218–237 (VIFICGVLVLVVPFLFICVS). Topologically, residues 238 to 257 (YLCILRTILKIPSAEGRRKA) are cytoplasmic. A helical membrane pass occupies residues 258–278 (FSTCASHLSVVIVHYGCASFI). Over 279 to 291 (YLRPTANYVSNKD) the chain is Extracellular. Residues 292 to 312 (RLVTVTYTIVTPLLNPMVYSL) form a helical membrane-spanning segment. Over 313 to 335 (RNKDVQLAIRKVLGKKGSLKLYN) the chain is Cytoplasmic.

It belongs to the G-protein coupled receptor 1 family.

It is found in the cell membrane. Functionally, odorant receptor. This is Olfactory receptor 10R2 (OR10R2) from Homo sapiens (Human).